Reading from the N-terminus, the 539-residue chain is RING finger protein 37 (539 aa).

The tract at residues 226 to 249 (PALPMESDCDPGGQSESQHSPCTL) is disordered. Positions 239–249 (QSESQHSPCTL) are enriched in polar residues. A U-box domain is found at 258-338 (DVPEEFLDPI…DRFLLQHSIS (81 aa)). 2 disordered regions span residues 359–399 (LPSR…EPTA) and 456–479 (GTRG…VSGP). Residues 374–395 (HYSLGMSASSSATSPLFSPTTS) show a composition bias toward low complexity. The RING-type zinc finger occupies 481–526 (CASCKQAFSSYSTNEPVYQLPCGHLLCRPCLSEKQRSQPMMCTACR).

Interacts with UBE2L3. Interacts with VCP. As to expression, expressed in testis and placenta.

The protein localises to the nucleus. The enzyme catalyses S-ubiquitinyl-[E2 ubiquitin-conjugating enzyme]-L-cysteine + [acceptor protein]-L-lysine = [E2 ubiquitin-conjugating enzyme]-L-cysteine + N(6)-ubiquitinyl-[acceptor protein]-L-lysine.. It functions in the pathway protein modification; protein ubiquitination. In terms of biological role, may have a ubiquitin-protein ligase activity acting as an E3 ubiquitin-protein ligase or as a ubiquitin-ubiquitin ligase promoting elongation of ubiquitin chains on substrates. This Mus musculus (Mouse) protein is RING finger protein 37 (Ubox5).